The primary structure comprises 382 residues: Non-structural maintenance of chromosomes element 4 homolog A (382 aa).

Basic and acidic residues predominate over residues 1 to 21 (MSGDSSGRRPEGRGRGRDPHR). The tract at residues 1 to 80 (MSGDSSGRRP…ASLEEETDPS (80 aa)) is disordered. A compositionally biased stretch (low complexity) spans 31–41 (RSPLSPGSRRG). A compositionally biased stretch (basic and acidic residues) spans 42–55 (AAPERREAPERPGL). Positions 56–78 (EDTEPSDSGDEMIDPASLEEETD) are enriched in acidic residues. Phosphothreonine is present on threonine 342. Serine 374 is modified (phosphoserine).

This sequence belongs to the NSE4 family. Component of the SMC5-SMC6 complex which consists at least of SMC5, SMC6, NSMCE2, NSMCE1, NSMCE4A or EID3 and NSMCE3. NSMCE1, NSMCE4A or EID3 and NSMCE3 probably form a subcomplex that bridges the head domains of the SMC5:SMC6 heterodimer. Interacts with NSMCE3.

The protein resides in the nucleus. It is found in the chromosome. It localises to the telomere. Its function is as follows. Component of the SMC5-SMC6 complex, a complex involved in repair of DNA double-strand breaks by homologous recombination. The complex may promote sister chromatid homologous recombination by recruiting the SMC1-SMC3 cohesin complex to double-strand breaks. The complex is required for telomere maintenance via recombination and mediates sumoylation of shelterin complex (telosome) components. This chain is Non-structural maintenance of chromosomes element 4 homolog A (NSMCE4A), found in Bos taurus (Bovine).